We begin with the raw amino-acid sequence, 490 residues long: Betaine aldehyde dehydrogenase (490 aa).

K(+) is bound by residues Thr26, Ile27, and Asp93. 150 to 152 contacts NAD(+); the sequence is GAW. Lys162 serves as the catalytic Charge relay system. NAD(+) is bound at residue 176–179; that stretch reads KPSE. K(+) is bound at residue Val180. An NAD(+)-binding site is contributed by 230-233; it reads GVAS. K(+) is bound at residue Leu246. Glu252 serves as the catalytic Proton acceptor. 3 residues coordinate NAD(+): Gly254, Cys286, and Glu387. The active-site Nucleophile is Cys286. Position 286 is a cysteine sulfenic acid (-SOH) (Cys286). Residues Lys457 and Gly460 each contribute to the K(+) site. Glu464 acts as the Charge relay system in catalysis.

The protein belongs to the aldehyde dehydrogenase family. As to quaternary structure, dimer of dimers. The cofactor is K(+).

It carries out the reaction betaine aldehyde + NAD(+) + H2O = glycine betaine + NADH + 2 H(+). It participates in amine and polyamine biosynthesis; betaine biosynthesis via choline pathway; betaine from betaine aldehyde: step 1/1. Involved in the biosynthesis of the osmoprotectant glycine betaine. Catalyzes the irreversible oxidation of betaine aldehyde to the corresponding acid. In Escherichia coli (strain ATCC 8739 / DSM 1576 / NBRC 3972 / NCIMB 8545 / WDCM 00012 / Crooks), this protein is Betaine aldehyde dehydrogenase.